The primary structure comprises 283 residues: Light-independent protochlorophyllide reductase iron-sulfur ATP-binding protein (283 aa).

Residues 15-20 and Lys-44 each bind ATP; that span reads GIGKST. A Mg(2+)-binding site is contributed by Ser-19. Residues Cys-100 and Cys-134 each contribute to the [4Fe-4S] cluster site. An ATP-binding site is contributed by 185 to 186; that stretch reads NR.

It belongs to the NifH/BchL/ChlL family. As to quaternary structure, homodimer. Protochlorophyllide reductase is composed of three subunits; ChlL, ChlN and ChlB. [4Fe-4S] cluster serves as cofactor.

The catalysed reaction is chlorophyllide a + oxidized 2[4Fe-4S]-[ferredoxin] + 2 ADP + 2 phosphate = protochlorophyllide a + reduced 2[4Fe-4S]-[ferredoxin] + 2 ATP + 2 H2O. It participates in porphyrin-containing compound metabolism; chlorophyll biosynthesis (light-independent). In terms of biological role, component of the dark-operative protochlorophyllide reductase (DPOR) that uses Mg-ATP and reduced ferredoxin to reduce ring D of protochlorophyllide (Pchlide) to form chlorophyllide a (Chlide). This reaction is light-independent. The L component serves as a unique electron donor to the NB-component of the complex, and binds Mg-ATP. This chain is Light-independent protochlorophyllide reductase iron-sulfur ATP-binding protein, found in Synechococcus sp. (strain JA-3-3Ab) (Cyanobacteria bacterium Yellowstone A-Prime).